Consider the following 400-residue polypeptide: Formate-dependent phosphoribosylglycinamide formyltransferase (400 aa).

Residues 22 to 23 (EL) and E82 contribute to the N(1)-(5-phospho-beta-D-ribosyl)glycinamide site. Residues R115, K157, 162–167 (SSGKGQ), 197–200 (EGFI), and E205 each bind ATP. The region spanning 120-315 (RLAAETLGLP…EFELHARAIL (196 aa)) is the ATP-grasp domain. The Mg(2+) site is built by E274 and E286. Residues D293, K362, and 369–370 (RR) each bind N(1)-(5-phospho-beta-D-ribosyl)glycinamide.

The protein belongs to the PurK/PurT family. Homodimer.

The catalysed reaction is N(1)-(5-phospho-beta-D-ribosyl)glycinamide + formate + ATP = N(2)-formyl-N(1)-(5-phospho-beta-D-ribosyl)glycinamide + ADP + phosphate + H(+). Its pathway is purine metabolism; IMP biosynthesis via de novo pathway; N(2)-formyl-N(1)-(5-phospho-D-ribosyl)glycinamide from N(1)-(5-phospho-D-ribosyl)glycinamide (formate route): step 1/1. Functionally, involved in the de novo purine biosynthesis. Catalyzes the transfer of formate to 5-phospho-ribosyl-glycinamide (GAR), producing 5-phospho-ribosyl-N-formylglycinamide (FGAR). Formate is provided by PurU via hydrolysis of 10-formyl-tetrahydrofolate. The polypeptide is Formate-dependent phosphoribosylglycinamide formyltransferase (Cupriavidus metallidurans (strain ATCC 43123 / DSM 2839 / NBRC 102507 / CH34) (Ralstonia metallidurans)).